The following is a 430-amino-acid chain: Adenylosuccinate synthetase (430 aa).

Residues 12–18 (GDEGKGK) and 40–42 (GHT) each bind GTP. D13 serves as the catalytic Proton acceptor. Residues D13 and G40 each contribute to the Mg(2+) site. IMP-binding positions include 13-16 (DEGK), 38-41 (NAGH), T128, R142, Q223, T238, and R302. The active-site Proton donor is H41. 298–304 (TTTGRPR) lines the substrate pocket. GTP contacts are provided by residues R304, 330–332 (LLD), and 412–414 (SVG).

Belongs to the adenylosuccinate synthetase family. As to quaternary structure, homodimer. Requires Mg(2+) as cofactor.

It localises to the cytoplasm. The catalysed reaction is IMP + L-aspartate + GTP = N(6)-(1,2-dicarboxyethyl)-AMP + GDP + phosphate + 2 H(+). It functions in the pathway purine metabolism; AMP biosynthesis via de novo pathway; AMP from IMP: step 1/2. Plays an important role in the de novo pathway of purine nucleotide biosynthesis. Catalyzes the first committed step in the biosynthesis of AMP from IMP. In Listeria monocytogenes serotype 4a (strain HCC23), this protein is Adenylosuccinate synthetase.